Consider the following 530-residue polypeptide: uncharacterized protein (530 aa).

Helical transmembrane passes span 4 to 23 (FLAA…GLAI), 28 to 47 (LFGV…VVST), 57 to 79 (FVFQ…PAFF), 91 to 113 (LFMI…AFGL), and 148 to 170 (VIGY…AVGA). The 85-residue stretch at 260-344 (LGGECDTKIE…MGEVRRFLGD (85 aa)) folds into the RCK C-terminal domain. 4 consecutive transmembrane segments (helical) span residues 352–374 (VNLL…PVPL), 379–398 (TMYL…LGAL), 419–441 (LGLA…QALT), and 451–473 (VGFA…LLKL).

This sequence belongs to the AAE transporter (TC 2.A.81) family.

Its subcellular location is the cell membrane. This is an uncharacterized protein from Corynebacterium efficiens (strain DSM 44549 / YS-314 / AJ 12310 / JCM 11189 / NBRC 100395).